A 283-amino-acid polypeptide reads, in one-letter code: Nucleotide-binding protein THEYE_A0235 (283 aa).

12 to 19 contacts ATP; it reads GLSGGGKT. 62-65 serves as a coordination point for GTP; it reads DIRV.

This sequence belongs to the RapZ-like family.

Its function is as follows. Displays ATPase and GTPase activities. This Thermodesulfovibrio yellowstonii (strain ATCC 51303 / DSM 11347 / YP87) protein is Nucleotide-binding protein THEYE_A0235.